Reading from the N-terminus, the 342-residue chain is Holliday junction branch migration complex subunit RuvB (342 aa).

A large ATPase domain (RuvB-L) region spans residues 1 to 181; that stretch reads MENRMVTPFD…FGMLCAMEFY (181 aa). ATP-binding positions include Leu20, Arg21, Gly62, Lys65, Thr66, Thr67, 128 to 130, Arg171, Tyr181, and Arg218; that span reads EDY. Thr66 contributes to the Mg(2+) binding site. A small ATPAse domain (RuvB-S) region spans residues 182 to 252; that stretch reads TDEELMEIVV…GAKAALDLLE (71 aa). The head domain (RuvB-H) stretch occupies residues 255–342; it reads KEGLDKIDNK…KDNQVSIFNK (88 aa). The DNA site is built by Arg310 and Arg315.

The protein belongs to the RuvB family. In terms of assembly, homohexamer. Forms an RuvA(8)-RuvB(12)-Holliday junction (HJ) complex. HJ DNA is sandwiched between 2 RuvA tetramers; dsDNA enters through RuvA and exits via RuvB. An RuvB hexamer assembles on each DNA strand where it exits the tetramer. Each RuvB hexamer is contacted by two RuvA subunits (via domain III) on 2 adjacent RuvB subunits; this complex drives branch migration. In the full resolvosome a probable DNA-RuvA(4)-RuvB(12)-RuvC(2) complex forms which resolves the HJ.

It localises to the cytoplasm. The enzyme catalyses ATP + H2O = ADP + phosphate + H(+). In terms of biological role, the RuvA-RuvB-RuvC complex processes Holliday junction (HJ) DNA during genetic recombination and DNA repair, while the RuvA-RuvB complex plays an important role in the rescue of blocked DNA replication forks via replication fork reversal (RFR). RuvA specifically binds to HJ cruciform DNA, conferring on it an open structure. The RuvB hexamer acts as an ATP-dependent pump, pulling dsDNA into and through the RuvAB complex. RuvB forms 2 homohexamers on either side of HJ DNA bound by 1 or 2 RuvA tetramers; 4 subunits per hexamer contact DNA at a time. Coordinated motions by a converter formed by DNA-disengaged RuvB subunits stimulates ATP hydrolysis and nucleotide exchange. Immobilization of the converter enables RuvB to convert the ATP-contained energy into a lever motion, pulling 2 nucleotides of DNA out of the RuvA tetramer per ATP hydrolyzed, thus driving DNA branch migration. The RuvB motors rotate together with the DNA substrate, which together with the progressing nucleotide cycle form the mechanistic basis for DNA recombination by continuous HJ branch migration. Branch migration allows RuvC to scan DNA until it finds its consensus sequence, where it cleaves and resolves cruciform DNA. The polypeptide is Holliday junction branch migration complex subunit RuvB (Clostridium botulinum (strain ATCC 19397 / Type A)).